A 488-amino-acid chain; its full sequence is Germacrene A hydroxylase (488 aa).

The Cytoplasmic segment spans residues 1-6; it reads MELSIT. The helical; Signal-anchor for type II membrane protein transmembrane segment at 7–23 threads the bilayer; sequence TSIALATIVFFLYKLAT. Residues 24–488 are Lumenal-facing; sequence RPKSTKKQLP…KTELLLVPSF (465 aa). N-linked (GlcNAc...) asparagine glycosylation is found at Asn169, Asn260, and Asn379. Position 432 (Cys432) interacts with heme.

Belongs to the cytochrome P450 family. Heme serves as cofactor.

The protein resides in the endoplasmic reticulum membrane. It catalyses the reaction (+)-(R)-germacrene A + 3 reduced [NADPH--hemoprotein reductase] + 3 O2 = germacra-1(10),4,11(13)-trien-12-oate + 3 oxidized [NADPH--hemoprotein reductase] + 4 H2O + 4 H(+). It functions in the pathway secondary metabolite biosynthesis; terpenoid biosynthesis. In terms of biological role, involved in the biosynthesis of germacrene-derived sesquiterpene lactones. Catalyzes three consecutive oxidations of germacrene A to produce germacrene A acid. Could also catalyze the three-step oxidation of non-natural substrate amorphadiene to artemisinic acid. The protein is Germacrene A hydroxylase of Lactuca sativa (Garden lettuce).